Consider the following 382-residue polypeptide: Small ribosomal subunit protein bS1 homolog (382 aa).

S1 motif domains are found at residues 18-85 (GDVV…LSKR), 103-168 (GHVF…LSHK), 189-257 (GDVV…LSIK), and 274-343 (GDIR…LSIK). Position 244 is a phosphoserine (Ser244).

It belongs to the bacterial ribosomal protein bS1 family.

The sequence is that of Small ribosomal subunit protein bS1 homolog from Bacillus cereus (strain ATCC 10987 / NRS 248).